A 354-amino-acid polypeptide reads, in one-letter code: 3-isopropylmalate dehydrogenase (354 aa).

76-87 contributes to the NAD(+) binding site; sequence GPRWDGAKERPE. The substrate site is built by Arg94, Arg104, Arg130, and Asp215. Positions 215, 239, and 243 each coordinate Mg(2+). 273–285 is a binding site for NAD(+); that stretch reads GSAPDIAGKNKAN.

Belongs to the isocitrate and isopropylmalate dehydrogenases family. LeuB type 1 subfamily. As to quaternary structure, homodimer. Requires Mg(2+) as cofactor. Mn(2+) serves as cofactor.

It is found in the cytoplasm. The enzyme catalyses (2R,3S)-3-isopropylmalate + NAD(+) = 4-methyl-2-oxopentanoate + CO2 + NADH. Its pathway is amino-acid biosynthesis; L-leucine biosynthesis; L-leucine from 3-methyl-2-oxobutanoate: step 3/4. Functionally, catalyzes the oxidation of 3-carboxy-2-hydroxy-4-methylpentanoate (3-isopropylmalate) to 3-carboxy-4-methyl-2-oxopentanoate. The product decarboxylates to 4-methyl-2 oxopentanoate. The polypeptide is 3-isopropylmalate dehydrogenase (Bacillus thuringiensis subsp. konkukian (strain 97-27)).